Consider the following 126-residue polypeptide: Late histone H2A.L3 (126 aa).

Residues 1 to 20 (MSGRGKGAGKARAKAKSRSA) form a disordered region. An N-acetylserine modification is found at Ser-2. Phosphoserine is present on Ser-2. Over residues 7-19 (GAGKARAKAKSRS) the composition is skewed to basic residues. Position 105 is an N5-methylglutamine (Gln-105). A Glycyl lysine isopeptide (Lys-Gly) (interchain with G-Cter in ubiquitin) cross-link involves residue Lys-120.

This sequence belongs to the histone H2A family. In terms of assembly, the nucleosome is a histone octamer containing two molecules each of H2A, H2B, H3 and H4 assembled in one H3-H4 heterotetramer and two H2A-H2B heterodimers. The octamer wraps approximately 147 bp of DNA. Post-translationally, monoubiquitination of Lys-120 gives a specific tag for epigenetic transcriptional repression. Phosphorylation of Ser-2 directly represses transcription.

The protein localises to the nucleus. Its subcellular location is the chromosome. Its function is as follows. Core component of nucleosome. Nucleosomes wrap and compact DNA into chromatin, limiting DNA accessibility to the cellular machineries which require DNA as a template. Histones thereby play a central role in transcription regulation, DNA repair, DNA replication and chromosomal stability. DNA accessibility is regulated via a complex set of post-translational modifications of histones, also called histone code, and nucleosome remodeling. This is Late histone H2A.L3 from Strongylocentrotus purpuratus (Purple sea urchin).